Consider the following 128-residue polypeptide: MTGSCCGSTFSSLSYGGGCCQPCCCRDPCCCRPVTCQTTVCRPVTCVPRCTRPICEPCRRPVCCDPCSLQEGCCRPITCCPSSCTAVVCRPCCWATTCCQPVSVQSPCCRPPCGQPTPCSTTCRTSSC.

A 10 X 5 AA repeats of C-C-[CDPQRWG]-[APRS]-[CIPSTVD] region spans residues 5 to 112 (CCGSTFSSLS…SVQSPCCRPP (108 aa)).

Belongs to the KRTAP type 2 family. As to quaternary structure, interacts with hair keratins.

Functionally, in the hair cortex, hair keratin intermediate filaments are embedded in an interfilamentous matrix, consisting of hair keratin-associated proteins (KRTAP), which are essential for the formation of a rigid and resistant hair shaft through their extensive disulfide bond cross-linking with abundant cysteine residues of hair keratins. The matrix proteins include the high-sulfur and high-glycine-tyrosine keratins. This Homo sapiens (Human) protein is Keratin-associated protein 2-1 (KRTAP2-1).